Reading from the N-terminus, the 673-residue chain is DNA ligase (673 aa).

NAD(+) is bound by residues 38 to 42 (DSVYD), 87 to 88 (SL), and Glu119. Lys121 functions as the N6-AMP-lysine intermediate in the catalytic mechanism. Residues Arg142, Glu179, Lys296, and Lys320 each contribute to the NAD(+) site. Positions 414, 417, 432, and 438 each coordinate Zn(2+). The 79-residue stretch at 595–673 (VVKSEIAGKT…EEAFLKLLKS (79 aa)) folds into the BRCT domain.

This sequence belongs to the NAD-dependent DNA ligase family. LigA subfamily. Requires Mg(2+) as cofactor. Mn(2+) is required as a cofactor.

It carries out the reaction NAD(+) + (deoxyribonucleotide)n-3'-hydroxyl + 5'-phospho-(deoxyribonucleotide)m = (deoxyribonucleotide)n+m + AMP + beta-nicotinamide D-nucleotide.. DNA ligase that catalyzes the formation of phosphodiester linkages between 5'-phosphoryl and 3'-hydroxyl groups in double-stranded DNA using NAD as a coenzyme and as the energy source for the reaction. It is essential for DNA replication and repair of damaged DNA. In Coxiella burnetii (strain CbuK_Q154) (Coxiella burnetii (strain Q154)), this protein is DNA ligase.